The chain runs to 216 residues: Peptide methionine sulfoxide reductase MsrA (216 aa).

Cysteine 54 is a catalytic residue.

This sequence belongs to the MsrA Met sulfoxide reductase family.

It catalyses the reaction L-methionyl-[protein] + [thioredoxin]-disulfide + H2O = L-methionyl-(S)-S-oxide-[protein] + [thioredoxin]-dithiol. It carries out the reaction [thioredoxin]-disulfide + L-methionine + H2O = L-methionine (S)-S-oxide + [thioredoxin]-dithiol. Its function is as follows. Has an important function as a repair enzyme for proteins that have been inactivated by oxidation. Catalyzes the reversible oxidation-reduction of methionine sulfoxide in proteins to methionine. The sequence is that of Peptide methionine sulfoxide reductase MsrA from Xanthomonas campestris pv. campestris (strain ATCC 33913 / DSM 3586 / NCPPB 528 / LMG 568 / P 25).